The sequence spans 101 residues: Enhancer of yellow 2 transcription factor (101 aa).

It belongs to the ENY2 family. In terms of assembly, component of the nuclear pore complex (NPC)-associated TREX-2/AMEX complex (anchoring and mRNA export complex), composed of e(y)2, xmas and PCID2. Within the TREX-2/ AMEX complex, interactions with xmas is required for localization to the nuclear periphery. Component of the SAGA transcription coactivator-HAT complexes, at least composed of Ada2b, e(y)2, Pcaf/Gcn5, Taf10 and Nipped-A/Trrap. Within the SAGA complex, e(y)2, Sgf11, and not/nonstop form an additional subcomplex of SAGA called the DUB module (deubiquitination module). Component of the THO complex, composed of at least e(y)2, HPR1, THO2, THOC5, THOC6 and THOC7. Interacts with Taf9. Interacts with su(Hw) (via zinc fingers). Interacts with the nuclear pore complex (NPC). Interaction between the TREX-2/AMEX complex and the ORC complex is required for ORC localization to mRNPs, and consequently mRNA export. Within the TREX-2/AMEX-ORC complex, interacts with Orc6 and (via N-terminus or C-terminus) with Orc3. Interacts with the zinc finger protein CG9890. As to expression, ubiquitous.

It is found in the nucleus. The protein resides in the nucleoplasm. It localises to the cytoplasm. The protein localises to the nucleus membrane. In terms of biological role, involved in mRNA export coupled transcription activation by association with both the TREX-2/AMEX and the SAGA complexes. The SAGA complex is a multiprotein complex that activates transcription by remodeling chromatin and mediating histone acetylation and deubiquitination. Within the SAGA complex, participates in a subcomplex that specifically deubiquitinates histone H2B. The SAGA complex is recruited to specific gene promoters by activators, where it is required for transcription. Required for nuclear receptor-mediated transactivation. Involved in transcription elongation by recruiting the THO complex onto nascent mRNA. The TREX-2/AMEX complex functions in docking export-competent ribonucleoprotein particles (mRNPs) to the nuclear entrance of the nuclear pore complex (nuclear basket). TREX-2/AMEX participates in mRNA export and accurate chromatin positioning in the nucleus by tethering genes to the nuclear periphery. Recruited to the su(Hw) insulators via its interaction with su(Hw) and participates in the barrier activity of such insulators. In contrast, it does not participate in the enhancer-blocking activity of the su(Hw) insulators. This is Enhancer of yellow 2 transcription factor from Drosophila melanogaster (Fruit fly).